Reading from the N-terminus, the 123-residue chain is Hydrogenase maturation factor HypA (123 aa).

His2 lines the Ni(2+) pocket. Positions 77, 80, 96, and 99 each coordinate Zn(2+).

It belongs to the HypA/HybF family.

In terms of biological role, involved in the maturation of [NiFe] hydrogenases. Required for nickel insertion into the metal center of the hydrogenase. In Methanococcus aeolicus (strain ATCC BAA-1280 / DSM 17508 / OCM 812 / Nankai-3), this protein is Hydrogenase maturation factor HypA.